A 224-amino-acid chain; its full sequence is LexA repressor (224 aa).

Positions 41–61 (MREIGDAVGLSSLSSVTHQLN) form a DNA-binding region, H-T-H motif. Active-site for autocatalytic cleavage activity residues include Ser148 and Lys185.

It belongs to the peptidase S24 family. In terms of assembly, homodimer.

It carries out the reaction Hydrolysis of Ala-|-Gly bond in repressor LexA.. Functionally, represses a number of genes involved in the response to DNA damage (SOS response), including recA and lexA. In the presence of single-stranded DNA, RecA interacts with LexA causing an autocatalytic cleavage which disrupts the DNA-binding part of LexA, leading to derepression of the SOS regulon and eventually DNA repair. This Leifsonia xyli subsp. xyli (strain CTCB07) protein is LexA repressor.